The chain runs to 64 residues: MAKKGTRVVVTLECTEARTSSEPRRSNGVSRYTTEKNKRNTTERLELKKFNPHLNKMTIHKEIK.

The segment covering 16 to 25 (EARTSSEPRR) has biased composition (basic and acidic residues). Residues 16–41 (EARTSSEPRRSNGVSRYTTEKNKRNT) form a disordered region.

The protein belongs to the bacterial ribosomal protein bL33 family.

This chain is Large ribosomal subunit protein bL33, found in Prochlorococcus marinus subsp. pastoris (strain CCMP1986 / NIES-2087 / MED4).